The sequence spans 229 residues: Ribosomal RNA small subunit methyltransferase G (229 aa).

S-adenosyl-L-methionine-binding positions include glycine 71, 122-123 (AE), and arginine 139.

It belongs to the methyltransferase superfamily. RNA methyltransferase RsmG family.

The protein resides in the cytoplasm. Functionally, specifically methylates the N7 position of a guanine in 16S rRNA. The sequence is that of Ribosomal RNA small subunit methyltransferase G from Thermotoga neapolitana (strain ATCC 49049 / DSM 4359 / NBRC 107923 / NS-E).